The following is a 498-amino-acid chain: Lysine--tRNA ligase (498 aa).

Residues Glu-401 and Glu-408 each coordinate Mg(2+).

Belongs to the class-II aminoacyl-tRNA synthetase family. As to quaternary structure, homodimer. Mg(2+) serves as cofactor.

The protein localises to the cytoplasm. The enzyme catalyses tRNA(Lys) + L-lysine + ATP = L-lysyl-tRNA(Lys) + AMP + diphosphate. The sequence is that of Lysine--tRNA ligase from Dehalococcoides mccartyi (strain ATCC BAA-2100 / JCM 16839 / KCTC 5957 / BAV1).